Here is a 493-residue protein sequence, read N- to C-terminus: Lysine--tRNA ligase (493 aa).

Mg(2+) is bound by residues glutamate 402 and glutamate 409.

The protein belongs to the class-II aminoacyl-tRNA synthetase family. As to quaternary structure, homodimer. Requires Mg(2+) as cofactor.

It is found in the cytoplasm. It catalyses the reaction tRNA(Lys) + L-lysine + ATP = L-lysyl-tRNA(Lys) + AMP + diphosphate. In Ureaplasma parvum serovar 3 (strain ATCC 27815 / 27 / NCTC 11736), this protein is Lysine--tRNA ligase.